The following is a 328-amino-acid chain: tRNA uridine(34) hydroxylase (328 aa).

The 95-residue stretch at 130-224 folds into the Rhodanese domain; the sequence is LDEDTVVLDT…YGKDPEVQGE (95 aa). C184 functions as the Cysteine persulfide intermediate in the catalytic mechanism.

It belongs to the TrhO family.

It catalyses the reaction uridine(34) in tRNA + AH2 + O2 = 5-hydroxyuridine(34) in tRNA + A + H2O. Its function is as follows. Catalyzes oxygen-dependent 5-hydroxyuridine (ho5U) modification at position 34 in tRNAs. The polypeptide is tRNA uridine(34) hydroxylase (Streptococcus sanguinis (strain SK36)).